The primary structure comprises 139 residues: Hydrogenase maturation factor HypA (139 aa).

Histidine 2 contributes to the Ni(2+) binding site. Zn(2+) contacts are provided by cysteine 73, cysteine 76, cysteine 110, and cysteine 113.

It belongs to the HypA/HybF family.

Involved in the maturation of [NiFe] hydrogenases. Required for nickel insertion into the metal center of the hydrogenase. The polypeptide is Hydrogenase maturation factor HypA (Pyrococcus abyssi (strain GE5 / Orsay)).